Reading from the N-terminus, the 140-residue chain is L-fucose mutarotase (140 aa).

Histidine 22 functions as the Proton donor in the catalytic mechanism. Substrate is bound by residues aspartate 30, arginine 107, and 129 to 131 (YGN).

Belongs to the RbsD / FucU family. FucU mutarotase subfamily. Homodecamer.

The protein resides in the cytoplasm. It catalyses the reaction alpha-L-fucose = beta-L-fucose. It functions in the pathway carbohydrate metabolism; L-fucose metabolism. Functionally, involved in the anomeric conversion of L-fucose. This is L-fucose mutarotase from Klebsiella pneumoniae (strain 342).